A 502-amino-acid chain; its full sequence is Probable glycine dehydrogenase (decarboxylating) subunit 2 (502 aa).

Lys273 is subject to N6-(pyridoxal phosphate)lysine.

It belongs to the GcvP family. C-terminal subunit subfamily. As to quaternary structure, the glycine cleavage system is composed of four proteins: P, T, L and H. In this organism, the P 'protein' is a heterodimer of two subunits. Pyridoxal 5'-phosphate is required as a cofactor.

It carries out the reaction N(6)-[(R)-lipoyl]-L-lysyl-[glycine-cleavage complex H protein] + glycine + H(+) = N(6)-[(R)-S(8)-aminomethyldihydrolipoyl]-L-lysyl-[glycine-cleavage complex H protein] + CO2. Its function is as follows. The glycine cleavage system catalyzes the degradation of glycine. The P protein binds the alpha-amino group of glycine through its pyridoxal phosphate cofactor; CO(2) is released and the remaining methylamine moiety is then transferred to the lipoamide cofactor of the H protein. The sequence is that of Probable glycine dehydrogenase (decarboxylating) subunit 2 from Pyrococcus horikoshii (strain ATCC 700860 / DSM 12428 / JCM 9974 / NBRC 100139 / OT-3).